We begin with the raw amino-acid sequence, 71 residues long: Large ribosomal subunit protein uL29 (71 aa).

Belongs to the universal ribosomal protein uL29 family.

The chain is Large ribosomal subunit protein uL29 from Roseiflexus sp. (strain RS-1).